A 1078-amino-acid chain; its full sequence is Lon protease homolog, mitochondrial (1078 aa).

The N-terminal 27 residues, 1 to 27 (MIKASKCNKPRALFLVRVSIPRTFIRN), are a transit peptide targeting the mitochondrion. Positions 71–123 (SEKEKQPSTDKSNDKDKPSRKEKGKDKEKENEEKKDINMDEKYEINEETDTKP) are enriched in basic and acidic residues. The tract at residues 71-179 (SEKEKQPSTD…KEFLSPSDSG (109 aa)) is disordered. The span at 127 to 157 (PNNPVSSKSNISSSSGGDNNNNNNNNNNNND) shows a compositional bias: low complexity. The span at 158–172 (SDGKNDDGSPKDKEF) shows a compositional bias: basic and acidic residues. The Lon N-terminal domain maps to 182–400 (PPFLAIAMKD…LSLQLLQVEA (219 aa)). An ATP-binding site is contributed by 548–555 (GPPGTGKT). The tract at residues 792–825 (NSPIEYIQSNTEVKAETTTESQQEQEKEKEKDEE) is disordered. Positions 815–825 (EQEKEKEKDEE) are enriched in basic and acidic residues. In terms of domain architecture, Lon proteolytic spans 861–1049 (TLNPGVATGL…SEVFEHLFQG (189 aa)). Active-site residues include Ser955 and Lys998.

Belongs to the peptidase S16 family. In terms of assembly, homohexamer or homoheptamer. Organized in a ring with a central cavity.

It localises to the mitochondrion matrix. The catalysed reaction is Hydrolysis of proteins in presence of ATP.. Its function is as follows. ATP-dependent serine protease that mediates the selective degradation of misfolded, unassembled or oxidatively damaged polypeptides as well as certain short-lived regulatory proteins in the mitochondrial matrix. May also have a chaperone function in the assembly of inner membrane protein complexes. Participates in the regulation of mitochondrial gene expression and in the maintenance of the integrity of the mitochondrial genome. Binds to mitochondrial DNA in a site-specific manner. The polypeptide is Lon protease homolog, mitochondrial (Candida albicans (strain SC5314 / ATCC MYA-2876) (Yeast)).